The chain runs to 72 residues: SRY-related protein MG43 (72 aa).

Residues Val-1–Lys-69 constitute a DNA-binding region (HMG box).

Its subcellular location is the nucleus. The protein is SRY-related protein MG43 of Tarentola mauritanica (Common wall gecko).